Here is a 652-residue protein sequence, read N- to C-terminus: Acetyl-coenzyme A synthetase (652 aa).

Residues 191-194 (RAGR), Thr-311, and Asn-335 each bind CoA. ATP is bound by residues 387-389 (GEP), 411-416 (DTWWQT), Asp-500, and Arg-515. Residue Ser-523 participates in CoA binding. Arg-526 is an ATP binding site. Residues Val-537, His-539, and Ile-542 each coordinate Mg(2+). CoA is bound at residue Arg-584. Lys-609 carries the N6-acetyllysine modification.

It belongs to the ATP-dependent AMP-binding enzyme family. Mg(2+) serves as cofactor. In terms of processing, acetylated. Deacetylation by the SIR2-homolog deacetylase activates the enzyme.

The enzyme catalyses acetate + ATP + CoA = acetyl-CoA + AMP + diphosphate. Catalyzes the conversion of acetate into acetyl-CoA (AcCoA), an essential intermediate at the junction of anabolic and catabolic pathways. Acs undergoes a two-step reaction. In the first half reaction, Acs combines acetate with ATP to form acetyl-adenylate (AcAMP) intermediate. In the second half reaction, it can then transfer the acetyl group from AcAMP to the sulfhydryl group of CoA, forming the product AcCoA. Its function is as follows. Enables the cell to use acetate during aerobic growth to generate energy via the TCA cycle, and biosynthetic compounds via the glyoxylate shunt. Acetylates CheY, the response regulator involved in flagellar movement and chemotaxis. The protein is Acetyl-coenzyme A synthetase of Serratia proteamaculans (strain 568).